The sequence spans 146 residues: Hemoglobin subunit delta (146 aa).

One can recognise a Globin domain in the interval 2–146 (HLTGEEKSAV…VATALAHKYH (145 aa)). H63 and H92 together coordinate heme b.

It belongs to the globin family. Heterotetramer of two delta chains and two alpha chains. As to expression, red blood cells.

In Ateles fusciceps (Brown-headed spider monkey), this protein is Hemoglobin subunit delta (HBD).